Here is a 506-residue protein sequence, read N- to C-terminus: Exoglucanase (506 aa).

The first 18 residues, 1 to 18 (MFPRSILLALSLTAVALG), serve as a signal peptide directing secretion. A catalytic region spans residues 19–450 (QQVGTNMAEN…IKFGDINSTF (432 aa)). Glu227 functions as the Nucleophile in the catalytic mechanism. Glu232 (proton donor) is an active-site residue. The N-linked (GlcNAc...) asparagine glycan is linked to Asn308. Positions 405 to 426 (ASPSQPGISRGTCSRDSGKPED) are disordered. A compositionally biased stretch (polar residues) spans 406–419 (SPSQPGISRGTCSR). N-linked (GlcNAc...) asparagine glycosylation occurs at Asn447. The segment at 449 to 472 (TFNNNGGGGGNPSPTTTRPNSPAQ) is disordered. The linker stretch occupies residues 451-473 (NNNGGGGGNPSPTTTRPNSPAQT). A compositionally biased stretch (low complexity) spans 460-470 (PSPTTTRPNSP). Positions 470–506 (PAQTMWGQCGGQGWTGPTACQSPSTCHVINDFYSQCF) constitute a CBM1 domain. Intrachain disulfides connect Cys478/Cys495 and Cys489/Cys505.

Belongs to the glycosyl hydrolase 7 (cellulase C) family.

The catalysed reaction is Hydrolysis of (1-&gt;4)-beta-D-glucosidic linkages in cellulose and cellotetraose, releasing cellobiose from the non-reducing ends of the chains.. The biological conversion of cellulose to glucose generally requires three types of hydrolytic enzymes: (1) Endoglucanases which cut internal beta-1,4-glucosidic bonds; (2) Exocellobiohydrolases that cut the disaccharide cellobiose from the non-reducing end of the cellulose polymer chain; (3) Beta-1,4-glucosidases which hydrolyze the cellobiose and other short cello-oligosaccharides to glucose. This is Exoglucanase (cel2) from Agaricus bisporus (White button mushroom).